We begin with the raw amino-acid sequence, 176 residues long: Protein SPMIP1 (176 aa).

Residues 55–80 (TLHPKAPLSPPPAPKSAPSKVPSPVP) are disordered. Residues 61 to 80 (PLSPPPAPKSAPSKVPSPVP) are compositionally biased toward pro residues.

The protein is Protein SPMIP1 of Homo sapiens (Human).